The following is a 487-amino-acid chain: UDP-glycosyltransferase 85A7 (487 aa).

UDP-alpha-D-glucose contacts are provided by residues 364–366, 381–389, and 403–406; these read CPQ, HCGWNSTLE, and FSEQ.

The protein belongs to the UDP-glycosyltransferase family. As to expression, expressed in roots, shoots, leaves and flowers.

This is UDP-glycosyltransferase 85A7 (UGT85A7) from Arabidopsis thaliana (Mouse-ear cress).